A 203-amino-acid chain; its full sequence is Small ribosomal subunit protein uS4c (203 aa).

Residues Thr-17–Asp-39 are disordered. The region spanning Met-92–Pro-164 is the S4 RNA-binding domain.

This sequence belongs to the universal ribosomal protein uS4 family. In terms of assembly, part of the 30S ribosomal subunit. Contacts protein S5. The interaction surface between S4 and S5 is involved in control of translational fidelity.

It is found in the plastid. It localises to the chloroplast. One of the primary rRNA binding proteins, it binds directly to 16S rRNA where it nucleates assembly of the body of the 30S subunit. Its function is as follows. With S5 and S12 plays an important role in translational accuracy. The sequence is that of Small ribosomal subunit protein uS4c (rps4) from Phaeodactylum tricornutum (strain CCAP 1055/1).